We begin with the raw amino-acid sequence, 2391 residues long: Filaggrin-2 (2391 aa).

The tract at residues 1–81 is S-100-like; the sequence is MTDLLRSVVT…TEFLLMIFKL (81 aa). 2 EF-hand domains span residues 8 to 43 and 49 to 84; these read VVTV…ELHP and DDPD…LTMA. Ca(2+) contacts are provided by Asp-62, Asp-64, Asp-66, Arg-68, and Glu-73. Disordered stretches follow at residues 96-275, 349-369, and 406-2391; these read ASGS…DSGR, SYSQ…CGGQ, and NSSS…LSRH. Over residues 98 to 107 the composition is skewed to basic residues; it reads GSKKHRRGHR. Residues 111–121 are compositionally biased toward acidic residues; the sequence is EESETEEDEED. Over residues 149 to 163 the composition is skewed to basic residues; that stretch reads GTVKCRHGSNSRRLG. Residues 166–176 show a composition bias toward polar residues; the sequence is GNLSSSGNQEG. Basic and acidic residues predominate over residues 193–209; the sequence is GKDRHGSSSVELRERIN. The Filaggrin 1 repeat unit spans residues 245 to 289; the sequence is ETSGHESNSTQSRIREQKLGSSCSGSGDSGRRSHACGYSNSSGCG. Polar residues-rich tracts occupy residues 420–442 and 449–476; these read GSGS…SSGF and SGQT…SGKT. A Filaggrin 2 repeat occupies 421 to 466; that stretch reads SGSSQSTSFEQHGTGLSQSSGFEQHVCGSGQTCGQHESTSSQSLGY. Residues 480–507 show a composition bias toward gly residues; the sequence is GQHGSGSGQSSGFGQCGSGSGQSSGFGQ. Residues 508–562 are compositionally biased toward low complexity; that stretch reads HGSVSGQSSGFGQHGSVSGQSSGFGQHESRSRQSSYGQHGSGSSQSSGYGQYGSR. A compositionally biased stretch (gly residues) spans 568 to 604; it reads GQHGLGSGQSTGFGQYGSGSGQSSGFGQHGSGSGQSS. The span at 605 to 655 shows a compositional bias: low complexity; that stretch reads GFGQHESRSGQSSYGQHSSGSSQSSGYGQHGSRQTSGFGQHGSGSSQSTGF. The span at 656 to 666 shows a compositional bias: gly residues; the sequence is GQYGSGSGQSS. Residues 667–734 show a composition bias toward low complexity; sequence GFGQHVSGSG…SSGQSSSFGQ (68 aa). Over residues 735 to 756 the composition is skewed to gly residues; sequence HGSGSGQSSGFGQHGSGSGQSS. Residues 757–807 are compositionally biased toward low complexity; the sequence is GFGQHESRSGQSSYGQHSSGSSQSSGYGQHGSRQTSGFGQHGSGSSQSTGF. The segment covering 808 to 831 has biased composition (gly residues); that stretch reads GQYGSGSGQSAGFGQHGSGSGQSS. The span at 832-884 shows a compositional bias: low complexity; it reads GFGQHESRSHQSSYGQHGSGSSQSSGYGQHGSSSGQTSGFGQHRSSSGQYSGF. The segment covering 885–908 has biased composition (gly residues); the sequence is GQHGSGSGQSSGFGQHGTGSGQYS. Residues 918–956 are compositionally biased toward low complexity; that stretch reads HQSSYGQHGSGSSQSSGYGQHGSSSGQTFGFGQHRSGSG. Positions 957-972 are enriched in gly residues; it reads QSSGFGQHGSGSGQSS. Composition is skewed to low complexity over residues 973 to 982 and 994 to 1027; these read GFGQHESGSG and SSQS…GFGQ. Residues 1019–1051 form a Filaggrin 3 repeat; it reads SGQTTGFGQHRSSSGQYSGFGQHGSGSDQSSGF. Over residues 1052–1062 the composition is skewed to gly residues; that stretch reads GQHGTGSGQSS. The segment covering 1063–1098 has biased composition (low complexity); sequence GFGQYESRSRQSSYGQHGSGSSQSSGYGQHGSNSGQ. The stretch at 1097-1141 is one Filaggrin 4 repeat; the sequence is GQTSGFGQHRPGSGQSSGFGQYGSGSGQSSGFGQHGSGTGKSSGF. A compositionally biased stretch (gly residues) spans 1111–1137; that stretch reads QSSGFGQYGSGSGQSSGFGQHGSGTGK. Positions 1148 to 1174 are enriched in low complexity; the sequence is SGQSSYGQHGTGSSQSSGCGQHESGSG. Over residues 1175–1198 the composition is skewed to polar residues; sequence PTTSFGQHVSGSDNFSSSGQHISD. Residues 1206–1220 show a composition bias toward gly residues; the sequence is GQYGSGSGQSTGLGQ. Residues 1226–1249 are compositionally biased toward polar residues; it reads VESGSTVHGRQETTHGQTINTTRH. Low complexity predominate over residues 1250–1263; it reads SQSGQGQSTQTGSR. At Ser-1276 the chain carries Phosphoserine. Residues 1329–1343 are compositionally biased toward polar residues; that stretch reads HGQSTQTGSRTSGRQ. The segment covering 1346–1355 has biased composition (basic and acidic residues); the sequence is SHSDATDSEV. The span at 1366–1377 shows a compositional bias: polar residues; that stretch reads QEQTHSQAGSQH. The span at 1378-1390 shows a compositional bias: basic and acidic residues; it reads GESESTVHERHET. Over residues 1406–1416 the composition is skewed to low complexity; the sequence is HGQSTQRGSRT. Phosphoserine is present on residues Ser-1427 and Ser-1428. Positions 1439–1459 are enriched in polar residues; the sequence is RPQSQEQTHGQAGSQHGESGS. Residues 1455 to 1510 form a Filaggrin 5 repeat; it reads GESGSTVHGRHGTTHGQTGDTTRHAHYHHGKSTQRGSSTTGRRGSGHSESSDSEVH. A compositionally biased stretch (low complexity) spans 1487-1496; that stretch reads TQRGSSTTGR. Ser-1504 and Ser-1505 each carry phosphoserine. The segment covering 1510–1529 has biased composition (low complexity); sequence HSGGSHTHSGHTHGQSGSQH. Positions 1544–1559 are enriched in polar residues; the sequence is HGQTGDTTRHSYSGHE. The segment covering 1560–1572 has biased composition (low complexity); sequence QTTQTGSRTTGRQ. 2 stretches are compositionally biased toward basic and acidic residues: residues 1575–1584 and 1605–1618; these read SHSESTDSEV and QHEE…ERHG. Ser-1579 carries the post-translational modification Phosphoserine. A Filaggrin 6 repeat occupies 1607 to 1662; the sequence is EEPEFTVHERHGTTHGQIGDTTGHSHSGHGQSTQRGSRTTGRQRSSHSESSDSEVH. Residues 1627 to 1649 are compositionally biased toward low complexity; that stretch reads TTGHSHSGHGQSTQRGSRTTGRQ. Residues 1652–1661 show a composition bias toward basic and acidic residues; that stretch reads SHSESSDSEV. Phosphoserine is present on residues Ser-1656 and Ser-1657. Low complexity-rich tracts occupy residues 1662–1686 and 1711–1720; these read HSGV…QSES and GLTTQTGSRT. Over residues 1755–1768 the composition is skewed to basic and acidic residues; the sequence is QHGESESIVHERHG. The Filaggrin 7 repeat unit spans residues 1757-1812; it reads GESESIVHERHGTIHGQTGDTTRHAHSGHGQSTQTGSRTTGRRSSGHSEYSDSEGH. Positions 1784 to 1795 are enriched in low complexity; that stretch reads GHGQSTQTGSRT. A phosphoserine mark is found at Ser-1800 and Ser-1807. Basic and acidic residues predominate over residues 1834–1845; sequence GESESIVDERHG. Residues 1849–1873 are compositionally biased toward low complexity; sequence GQTGDTSGHSQSGHGQSTQSGSSTT. Over residues 1879 to 1888 the composition is skewed to basic and acidic residues; that stretch reads GHSESSDSEV. Phosphoserine is present on residues Ser-1883, Ser-1884, and Ser-1959. Filaggrin repeat units lie at residues 1928–1964 and 1984–2039; these read DTTE…SEGP and PESG…SEGH. 2 stretches are compositionally biased toward low complexity: residues 1963-1982 and 2013-2022; these read GPSG…AGSH and GQSTQRGSRT. Position 2034 is a phosphoserine (Ser-2034). Low complexity-rich tracts occupy residues 2039-2059, 2114-2125, and 2162-2176; these read HSGV…SQHG, HSGVSHTHSGHT, and HGQS…TGRQ. A Filaggrin 10 repeat occupies 2134 to 2189; it reads GESGSAIHGRQGTIHGQTGDTTRHGQSGHGQSTQTGSRTTGRQRSSHSESSDSEVH. Residues 2179–2190 show a composition bias toward basic and acidic residues; sequence SHSESSDSEVHS. 3 stretches are compositionally biased toward low complexity: residues 2201–2211, 2219–2228, and 2238–2247; these read HSQAGSRHGQS, QGTTHGQTGD, and GQSTQRGSRT. Residues 2273–2288 are compositionally biased toward polar residues; the sequence is GHIQGQAGSQQRQPGS. Low complexity predominate over residues 2320-2331; the sequence is SRSSRASHFQSH. Residues 2367–2391 show a composition bias toward polar residues; the sequence is SRKSISNSHLSWSTDSTANKQLSRH.

It belongs to the S100-fused protein family. This sequence in the N-terminal section; belongs to the S-100 family. Deiminated by PADI1, PADI2 or PADI3 in vitro. The deiminated form is degraded by calpain-1/CAPN1 more quickly and into shorter peptides than the intact protein. In terms of processing, may be processed by calpain-1/CAPN1 in the uppermost epidermal layers. Expressed in skin, thymus, stomach and placenta, but not detected in heart, brain, liver, lung, bone marrow, small intestine, spleen, prostate, colon, adrenal gland, kidney, pancreas, mammary gland, bladder, thyroid, salivary gland and trachea. Weakly expressed in esophagus, tonsils and testis (at protein level). In the skin, strongly expressed in the upper stratum granulosum and lower stratum corneum, but not detected in the upper stratum corneum (at protein level). In scalp hair follicles, mainly restricted within the granular and cornified cells surrounding the infundibular outer root sheath, with weak expression in central and proximal outer root sheath (at protein level). Tends to be down-regulated in sporiatic lesions compared to non-lesional skin inthe same patients.

It localises to the cytoplasm. It is found in the cytoplasmic granule. Essential for normal cell-cell adhesion in the cornified cell layers. Important for proper integrity and mechanical strength of the stratum corneum of the epidermis. In Homo sapiens (Human), this protein is Filaggrin-2 (FLG2).